The primary structure comprises 712 residues: Auxin response factor 15 (712 aa).

The segment at residues 142-244 (FCKTLTASDT…ELRLGVRRAA (103 aa)) is a DNA-binding region (TF-B3).

Belongs to the ARF family. As to quaternary structure, homo and heterodimers. In terms of tissue distribution, expressed in roots, culms, leaves and young panicles.

The protein localises to the nucleus. Its function is as follows. Auxin response factors (ARFs) are transcriptional factors that bind specifically to the DNA sequence 5'-TGTCTC-3' found in the auxin-responsive promoter elements (AuxREs). The chain is Auxin response factor 15 (ARF15) from Oryza sativa subsp. japonica (Rice).